The following is a 426-amino-acid chain: uncharacterized protein (426 aa).

The signal sequence occupies residues 1 to 23 (MKKFILFLIILLFSIYFLNVSSA).

This is an uncharacterized protein from Methanocaldococcus jannaschii (strain ATCC 43067 / DSM 2661 / JAL-1 / JCM 10045 / NBRC 100440) (Methanococcus jannaschii).